A 482-amino-acid chain; its full sequence is E1B 55 kDa protein (482 aa).

Residues 73 to 94 (VLDSGEGPSCADDRDKQEKKES) are disordered. Basic and acidic residues predominate over residues 83 to 94 (ADDRDKQEKKES). Ser-476 and Ser-477 each carry phosphoserine.

This sequence belongs to the adenoviridae E1B 55 kDa protein family. Interacts with host PML-4 and PML-5; this interaction promotes efficient subnuclear targeting of E1B-55K to PML nuclear bodies. Interacts with E4-ORF3 protein. Interacts with E4-ORF6 protein.

The protein resides in the host nucleus. Its subcellular location is the host cytoplasm. In terms of biological role, plays a major role to prevent cellular inhibition of viral genome replication. Assembles an SCF-like E3 ubiquitin ligase complex based on the cellular proteins ELOB, ELOC, CUL5 and RBX1, in cooperation with viral E4orf6. This viral RING-type ligase ubiquitinates cellular substrates and targets them to proteasomal degradation: TP53/p53, LIG4, MRE11-RAD50-NBS1 (MRN) complex, ITGA3, DAXX and BLM. E1B-55K probably acts as the substrate-specific adapter of the SCF-like E3 ubiquitin ligase complex. Degradation of host TP53/p53 activity is essential for preventing E1A-induced TP53 accumulation that would otherwise lead to cell apoptosis and growth arrest. E1B-55K also inactivates TP53 transcription-factor activity by binding its transactivation domain. E1B-55K also functions as a SUMO1 E3 ligase for TP53 which causes the latter to be sequestered in promyelocytic leukemia (PML) nuclear bodies thereby contributing to maximal inhibition of TP53 function. This chain is E1B 55 kDa protein, found in Homo sapiens (Human).